The following is a 95-amino-acid chain: MALERSEVEKIAHLARLGLNESDIPQTTETLNSILGLIDQMQAVDTQGIEPLAHPLEATQRLRADVVSEHNQRDAYQAIAPAVESGLYLVPKVIE.

This sequence belongs to the GatC family. In terms of assembly, heterotrimer of A, B and C subunits.

The catalysed reaction is L-glutamyl-tRNA(Gln) + L-glutamine + ATP + H2O = L-glutaminyl-tRNA(Gln) + L-glutamate + ADP + phosphate + H(+). It carries out the reaction L-aspartyl-tRNA(Asn) + L-glutamine + ATP + H2O = L-asparaginyl-tRNA(Asn) + L-glutamate + ADP + phosphate + 2 H(+). Its function is as follows. Allows the formation of correctly charged Asn-tRNA(Asn) or Gln-tRNA(Gln) through the transamidation of misacylated Asp-tRNA(Asn) or Glu-tRNA(Gln) in organisms which lack either or both of asparaginyl-tRNA or glutaminyl-tRNA synthetases. The reaction takes place in the presence of glutamine and ATP through an activated phospho-Asp-tRNA(Asn) or phospho-Glu-tRNA(Gln). The polypeptide is Aspartyl/glutamyl-tRNA(Asn/Gln) amidotransferase subunit C (Ectopseudomonas mendocina (strain ymp) (Pseudomonas mendocina)).